The following is a 150-amino-acid chain: UPF0756 membrane protein ABSDF1616 (150 aa).

The next 4 membrane-spanning stretches (helical) occupy residues 1–21, 45–65, 83–103, and 115–135; these read MLAQ…CGLL, FFPY…TIGV, FISF…WLGG, and VVAG…GVPV.

The protein belongs to the UPF0756 family.

The protein resides in the cell membrane. This Acinetobacter baumannii (strain SDF) protein is UPF0756 membrane protein ABSDF1616.